Consider the following 137-residue polypeptide: Probable calcium-binding protein CML33 (137 aa).

EF-hand domains lie at 1–36 (MNNMSLSDIFERFDTSKDGKISWEEFRDAIHALSPS), 37–72 (IPSEKLVEMFIQLDTNGDGQVDAAKFASCMDQTAQS), 76–111 (DVEKELKDAFKLYDINCDGKISANELHVVMTRLGEK), and 112–137 (CTVESCVGMVQAIDVDGDGYIRFVGV). 5 residues coordinate Ca(2+): Asp14, Ser16, Asp18, Lys20, and Glu25. Asp89, Asn91, Asp93, Lys95, and Glu100 together coordinate Ca(2+).

Potential calcium sensor. The chain is Probable calcium-binding protein CML33 (CML33) from Arabidopsis thaliana (Mouse-ear cress).